Here is a 92-residue protein sequence, read N- to C-terminus: Acylphosphatase (92 aa).

The Acylphosphatase-like domain maps to 5-92 (RAHVVVSGKV…GEFSGFKIAF (88 aa)). Residues Arg-20 and Asn-38 contribute to the active site.

It belongs to the acylphosphatase family.

It catalyses the reaction an acyl phosphate + H2O = a carboxylate + phosphate + H(+). The polypeptide is Acylphosphatase (acyP) (Pelotomaculum thermopropionicum (strain DSM 13744 / JCM 10971 / SI)).